We begin with the raw amino-acid sequence, 1163 residues long: DNA-directed RNA polymerase subunit beta' (1163 aa).

Zn(2+) contacts are provided by Cys59, Cys61, Cys74, and Cys77. Asp449, Asp451, and Asp453 together coordinate Mg(2+). Zn(2+)-binding residues include Cys794, Cys868, Cys875, and Cys878.

Belongs to the RNA polymerase beta' chain family. The RNAP catalytic core consists of 2 alpha, 1 beta, 1 beta' and 1 omega subunit. When a sigma factor is associated with the core the holoenzyme is formed, which can initiate transcription. The cofactor is Mg(2+). Zn(2+) serves as cofactor.

It catalyses the reaction RNA(n) + a ribonucleoside 5'-triphosphate = RNA(n+1) + diphosphate. Its function is as follows. DNA-dependent RNA polymerase catalyzes the transcription of DNA into RNA using the four ribonucleoside triphosphates as substrates. This chain is DNA-directed RNA polymerase subunit beta', found in Caldicellulosiruptor saccharolyticus (strain ATCC 43494 / DSM 8903 / Tp8T 6331).